The following is a 239-amino-acid chain: MNPEIFAKELAKYGFELNEKQKKQFATYYDKLVEFNKKVNLTRITDKNEVYLKHFFDSITPLLEFPDLFKGEKTLCDVGAGAGFPSLPIKILCPNLSITIVDSLGKRLKFLDELVNDLGLDKVTLVHSRAEDAGQNKDLREKFDLVTGRAVARMSVLSEYCLPLAKVGGYLVALKGPKAQDELAEAKHAIDVLGGKVEDVKELTLPDTDDDRTLIVVEKIKATPKKYPRQAGTPNKKPL.

S-adenosyl-L-methionine is bound by residues Gly79, Phe84, 130-131 (AE), and Arg149.

The protein belongs to the methyltransferase superfamily. RNA methyltransferase RsmG family.

The protein resides in the cytoplasm. Functionally, specifically methylates the N7 position of a guanine in 16S rRNA. This is Ribosomal RNA small subunit methyltransferase G from Lactobacillus johnsonii (strain CNCM I-12250 / La1 / NCC 533).